Reading from the N-terminus, the 294-residue chain is uncharacterized protein (294 aa).

The first 19 residues, 1-19 (MFKRSLFILLLLAASLVKA), serve as a signal peptide directing secretion.

This is an uncharacterized protein from Rickettsia felis (strain ATCC VR-1525 / URRWXCal2) (Rickettsia azadi).